A 301-amino-acid polypeptide reads, in one-letter code: MGSKTSKMCCPQLRKKKRQKAHKEGPSSQELNDLNAKSQGPNELLQKIKEYEQEIRNILQKHQEEKTALADAHKADVEARTLVLQAQAQKDRDAETVKLLSEQAATMKAEMEEMFAELQKSYEQEKSSLTEIHQQLTDALQESVDELNSQLASFREKMKRVEESILSQDYQRHIQDYGSPGQFWEKELQSLHFVIEMKSELIREQDKRLQRHKSTMERSLELEERSRTLQQENEALKVQTQKQGAITVRLSEELLSIQTTLEKQTHRCEQLEREKEQNLYRAVIGDITQQFSLQELPVMVL.

The segment at 1 to 43 (MGSKTSKMCCPQLRKKKRQKAHKEGPSSQELNDLNAKSQGPNE) is disordered. Gly2 is lipidated: N-myristoyl glycine. Polar residues predominate over residues 26-41 (PSSQELNDLNAKSQGP). Coiled-coil stretches lie at residues 42–167 (NELL…SILS) and 213–281 (KSTM…NLYR).

The protein belongs to the CCDC69 family.

The protein resides in the cytoplasm. The protein localises to the cytoskeleton. It localises to the spindle. It is found in the midbody. May act as a scaffold to regulate the recruitment and assembly of spindle midzone components. The polypeptide is Coiled-coil domain-containing protein 69-B (ccdc69-b) (Xenopus laevis (African clawed frog)).